Consider the following 725-residue polypeptide: Polyribonucleotide nucleotidyltransferase (725 aa).

2 residues coordinate Mg(2+): aspartate 487 and aspartate 493. One can recognise a KH domain in the interval 554-613; the sequence is PRIETMQIPTDKIREVIGTGGKVIREIVEKTGAKIDIQDTGVIKIASSDAKAIKAAYNWI. The 69-residue stretch at 623 to 691 folds into the S1 motif domain; that stretch reads GMIYDGTVVK…ERGKIRLSMK (69 aa). Residues 697–725 are disordered; that stretch reads TGEDITEKLKAEREADRNRERQARQSAGE. Residues 701 to 719 are compositionally biased toward basic and acidic residues; that stretch reads ITEKLKAEREADRNRERQA.

The protein belongs to the polyribonucleotide nucleotidyltransferase family. Requires Mg(2+) as cofactor.

Its subcellular location is the cytoplasm. It catalyses the reaction RNA(n+1) + phosphate = RNA(n) + a ribonucleoside 5'-diphosphate. Its function is as follows. Involved in mRNA degradation. Catalyzes the phosphorolysis of single-stranded polyribonucleotides processively in the 3'- to 5'-direction. This chain is Polyribonucleotide nucleotidyltransferase, found in Methylobacterium nodulans (strain LMG 21967 / CNCM I-2342 / ORS 2060).